The sequence spans 199 residues: MKIAVTGGYSSGKSSVSAVLTTLLDCFFISADIACKNELQVGATGWQQLKELWGPDYFSEDGEVDREAVREKIFLDPASKKELEAILHPLAHRQIVDAGLRADVCDKHLVAEIPLLFESDQSYDFDMVIVVSVAEDIAISRAMRRDDVRASLATSIIASQLPLAIKEARADFIINNDGLFAATYSQILFFVADRIEKKK.

Positions 2–199 (KIAVTGGYSS…FVADRIEKKK (198 aa)) constitute a DPCK domain. 10–15 (SSGKSS) contacts ATP.

This sequence belongs to the CoaE family.

Its subcellular location is the cytoplasm. It carries out the reaction 3'-dephospho-CoA + ATP = ADP + CoA + H(+). Its pathway is cofactor biosynthesis; coenzyme A biosynthesis; CoA from (R)-pantothenate: step 5/5. Its function is as follows. Catalyzes the phosphorylation of the 3'-hydroxyl group of dephosphocoenzyme A to form coenzyme A. The sequence is that of Dephospho-CoA kinase from Desulfotalea psychrophila (strain LSv54 / DSM 12343).